Consider the following 301-residue polypeptide: MEKGRIIRSLSGYYDIETDKGKIQRTRARGEFRKSGQKPIVGDFVDFESENDDGLIWKIYPRINALVRPPIANIDIAVIVTALKEPNFAANLLDRQLVALEAAHVKPVIYFSKADLLTDEAYAAITIIAEDYRQIGYTVLLPASNNNVVARQALQSLLDGRVSVFMGQTGAGKSTLLNQLSPKLGLETGIVSKALSRGKHTTRQVTLIKVNDALIADTPGFSSYEVFDFSAEALDDYFPEFVAVRDGCRFRGCLHLNEPACAVKEAVSLGAIPESRYNSYKAFYELIKSQKPKYKTDNRNF.

The region spanning 63-224 (INALVRPPIA…IADTPGFSSY (162 aa)) is the CP-type G domain. Residues 112–115 (SKAD) and 167–175 (GQTGAGKST) contribute to the GTP site. The Zn(2+) site is built by cysteine 248, cysteine 253, histidine 255, and cysteine 261.

The protein belongs to the TRAFAC class YlqF/YawG GTPase family. RsgA subfamily. Monomer. Associates with 30S ribosomal subunit, binds 16S rRNA. Zn(2+) is required as a cofactor.

It localises to the cytoplasm. Functionally, one of several proteins that assist in the late maturation steps of the functional core of the 30S ribosomal subunit. Helps release RbfA from mature subunits. May play a role in the assembly of ribosomal proteins into the subunit. Circularly permuted GTPase that catalyzes slow GTP hydrolysis, GTPase activity is stimulated by the 30S ribosomal subunit. The polypeptide is Small ribosomal subunit biogenesis GTPase RsgA (Leuconostoc citreum (strain KM20)).